A 410-amino-acid polypeptide reads, in one-letter code: LL-diaminopimelate aminotransferase (410 aa).

Substrate-binding residues include Y15 and G42. Pyridoxal 5'-phosphate contacts are provided by residues Y72, 108-109 (AK), Y132, N187, Y218, and 246-248 (SFS). Residues K109, Y132, and N187 each coordinate substrate. K249 is subject to N6-(pyridoxal phosphate)lysine. Positions 257 and 292 each coordinate pyridoxal 5'-phosphate. Substrate-binding residues include N292 and R388.

It belongs to the class-I pyridoxal-phosphate-dependent aminotransferase family. LL-diaminopimelate aminotransferase subfamily. Homodimer. The cofactor is pyridoxal 5'-phosphate.

The enzyme catalyses (2S,6S)-2,6-diaminopimelate + 2-oxoglutarate = (S)-2,3,4,5-tetrahydrodipicolinate + L-glutamate + H2O + H(+). Its pathway is amino-acid biosynthesis; L-lysine biosynthesis via DAP pathway; LL-2,6-diaminopimelate from (S)-tetrahydrodipicolinate (aminotransferase route): step 1/1. In terms of biological role, involved in the synthesis of meso-diaminopimelate (m-DAP or DL-DAP), required for both lysine and peptidoglycan biosynthesis. Catalyzes the direct conversion of tetrahydrodipicolinate to LL-diaminopimelate. Can also use m-DAP instead of LL-DAP as the amino-group donor. The chain is LL-diaminopimelate aminotransferase from Acetivibrio thermocellus (strain ATCC 27405 / DSM 1237 / JCM 9322 / NBRC 103400 / NCIMB 10682 / NRRL B-4536 / VPI 7372) (Clostridium thermocellum).